The chain runs to 805 residues: Sucrose synthase (805 aa).

The tract at residues 275 to 752 (MVFNVVILSP…GLKRIQEKYT (478 aa)) is GT-B glycosyltransferase.

The protein belongs to the glycosyltransferase 1 family. Plant sucrose synthase subfamily.

The enzyme catalyses an NDP-alpha-D-glucose + D-fructose = a ribonucleoside 5'-diphosphate + sucrose + H(+). Functionally, sucrose-cleaving enzyme that provides UDP-glucose and fructose for various metabolic pathways. This chain is Sucrose synthase, found in Solanum tuberosum (Potato).